The sequence spans 279 residues: Shikimate dehydrogenase (NADP(+)) (279 aa).

Shikimate is bound by residues 14–16 and threonine 63; that span reads SIS. Catalysis depends on lysine 67, which acts as the Proton acceptor. Residue glutamate 79 coordinates NADP(+). Asparagine 88 and aspartate 103 together coordinate shikimate. Residues 127 to 131, 151 to 156, and methionine 219 each bind NADP(+); these read GAGGA and NRTYEK. Tyrosine 221 lines the shikimate pocket. Residue glycine 242 coordinates NADP(+).

This sequence belongs to the shikimate dehydrogenase family. Homodimer.

It catalyses the reaction shikimate + NADP(+) = 3-dehydroshikimate + NADPH + H(+). The protein operates within metabolic intermediate biosynthesis; chorismate biosynthesis; chorismate from D-erythrose 4-phosphate and phosphoenolpyruvate: step 4/7. Functionally, involved in the biosynthesis of the chorismate, which leads to the biosynthesis of aromatic amino acids. Catalyzes the reversible NADPH linked reduction of 3-dehydroshikimate (DHSA) to yield shikimate (SA). This chain is Shikimate dehydrogenase (NADP(+)), found in Caldicellulosiruptor saccharolyticus (strain ATCC 43494 / DSM 8903 / Tp8T 6331).